The primary structure comprises 344 residues: Hyoscyamine 6-dioxygenase (344 aa).

Residues 193–293 (QIQMMLTNYY…RVSIATLIGP (101 aa)) form the Fe2OG dioxygenase domain. Fe cation contacts are provided by histidine 217, aspartate 219, and histidine 274. Arginine 284 contacts 2-oxoglutarate.

This sequence belongs to the iron/ascorbate-dependent oxidoreductase family. Monomer. Fe(2+) serves as cofactor. The cofactor is L-ascorbate. Post-translationally, the N-terminus is blocked. Root.

It catalyses the reaction L-hyoscyamine + 2-oxoglutarate + O2 = (6S)-6-hydroxyhyoscyamine + succinate + CO2. It participates in alkaloid biosynthesis; scopolamine biosynthesis. This Hyoscyamus niger (Black henbane) protein is Hyoscyamine 6-dioxygenase (H6H).